Reading from the N-terminus, the 296-residue chain is Nucleotide-binding protein Pnec_1620 (296 aa).

8–15 serves as a coordination point for ATP; sequence GISGSGKS. Position 57-60 (57-60) interacts with GTP; that stretch reads DARR.

This sequence belongs to the RapZ-like family.

Functionally, displays ATPase and GTPase activities. The polypeptide is Nucleotide-binding protein Pnec_1620 (Polynucleobacter necessarius subsp. necessarius (strain STIR1)).